Here is a 305-residue protein sequence, read N- to C-terminus: RNA-binding protein with serine-rich domain 1 (305 aa).

A compositionally biased stretch (basic residues) spans 1-10 (MDLSGVKKKS). The tract at residues 1 to 161 (MDLSGVKKKS…KRRSPSPKPT (161 aa)) is necessary for interaction with SRP54, nuclear localization and exon-skipping. A disordered region spans residues 1 to 170 (MDLSGVKKKS…TKVHIGRLTR (170 aa)). Residues 1–220 (MDLSGVKKKS…ENPDEAEKAL (220 aa)) are necessary for interaction with the cleaved p110 isoform of CDC2L1. Residues K7 and K15 each participate in a glycyl lysine isopeptide (Lys-Gly) (interchain with G-Cter in SUMO2) cross-link. Residues 33 to 59 (DRSDEKSKDRSKDKGTTKESSEKDRGR) show a composition bias toward basic and acidic residues. Residue S53 is modified to Phosphoserine. Positions 68–126 (ASSGSSSTRSRSSSTSSSGSSTSTGSSSGSSSSSASSRSGSSSTSRSSSSSSSSGSPSP) are enriched in low complexity. The necessary for interactions with UPF2 and UPF3B and UPF2-dependent NMD stretch occupies residues 69–121 (SSGSSSTRSRSSSTSSSGSSTSTGSSSGSSSSSASSRSGSSSTSRSSSSSSSS). Basic residues-rich tracts occupy residues 127-143 (SRRR…KSKP) and 151-167 (RKRR…HIGR). Phosphoserine occurs at positions 155 and 157. The necessary for interaction with PNN and exon-skipping stretch occupies residues 156 to 242 (PSPKPTKVHI…ITATAVLAPW (87 aa)). The interval 159–244 (KPTKVHIGRL…ATAVLAPWPR (86 aa)) is interaction with SAP18 and ACIN1. Position 161 is a phosphothreonine (T161). Residues 161-240 (TKVHIGRLTR…QEITATAVLA (80 aa)) form the RRM domain. K218 is modified (N6-acetyllysine). The tract at residues 238-305 (VLAPWPRPPP…RSRSSSNSSR (68 aa)) is necessary for interaction with TRA2B, nuclear localization and exon-skipping. Residues 240 to 305 (APWPRPPPRR…RSRSSSNSSR (66 aa)) are disordered. The segment covering 242–262 (WPRPPPRRFSPPRRMLPPPPM) has biased composition (pro residues). The span at 266–298 (SPPRMRRRSRSPRRRSPVRRRSRSPGRRRHRSR) shows a compositional bias: basic residues.

The protein belongs to the splicing factor SR family. As to quaternary structure, found in mRNA splicing-dependent exon junction complexes (EJC). Found in a post-splicing complex with NXF1, RBM8A, UPF1, UPF2, UPF3A, UPF3B and RNPS1. Component of the heterotrimeric ASAP (apoptosis- and splicing-associated protein) and PSAP complexes consisting of RNPS1, SAP18 and either ACIN1 or PNN, respectively; the ASAP and PSAP complexes probably are formed mutually exclusive. Component of the active spliceosome. Associates with polysomes. Interacts with the cleaved p110 isoform of CDC2L1, CSNK2A1, PNN, SART3, SRP54, SRRM1 and TRA2B/SFRS10. Phosphorylated on one or more of the four Ser/Thr residues (Ser-43, Thr-49, Ser-52 or Ser-53). Ser-53 phosphorylation site is important for splicing and translation stimulation activity in vitro.

The protein resides in the nucleus. It is found in the nucleus speckle. It localises to the cytoplasm. In terms of biological role, part of pre- and post-splicing multiprotein mRNP complexes. Auxiliary component of the splicing-dependent multiprotein exon junction complex (EJC) deposited at splice junction on mRNAs. The EJC is a dynamic structure consisting of core proteins and several peripheral nuclear and cytoplasmic associated factors that join the complex only transiently either during EJC assembly or during subsequent mRNA metabolism. Component of the ASAP and PSAP complexes which bind RNA in a sequence-independent manner and are proposed to be recruited to the EJC prior to or during the splicing process and to regulate specific excision of introns in specific transcription subsets. The ASAP complex can inhibit RNA processing during in vitro splicing reactions. The ASAP complex promotes apoptosis and is disassembled after induction of apoptosis. Enhances the formation of the ATP-dependent A complex of the spliceosome. Involved in both constitutive splicing and, in association with SRP54 and TRA2B/SFRS10, in distinctive modulation of alternative splicing in a substrate-dependent manner. Involved in the splicing modulation of BCL2L1/Bcl-X (and probably other apoptotic genes); specifically inhibits formation of proapoptotic isoforms such as Bcl-X(S); the activity is different from the established EJC assembly and function. Participates in mRNA 3'-end cleavage. Involved in UPF2-dependent nonsense-mediated decay (NMD) of mRNAs containing premature stop codons. Also mediates increase of mRNA abundance and translational efficiency. Binds spliced mRNA 20-25 nt upstream of exon-exon junctions. The polypeptide is RNA-binding protein with serine-rich domain 1 (Rnps1) (Rattus norvegicus (Rat)).